The chain runs to 255 residues: Probable pyridoxal 5'-phosphate synthase subunit PDX2 (255 aa).

46-48 (GES) provides a ligand contact to L-glutamine. Residue Cys-78 is the Nucleophile of the active site. L-glutamine contacts are provided by residues Arg-108 and 142-143 (IR). Residues His-202 and Glu-204 each act as charge relay system in the active site. The tract at residues 225-255 (GASSSSSKTIVSVGETSAGPEPAKPDLPIFQ) is disordered.

Belongs to the glutaminase PdxT/SNO family. Interacts with PDX1.1 or PDX1.3, but not with PDX1.2. Binds to RPA2A. In terms of tissue distribution, strongly expressed in roots, stems, leaves and flowers.

The protein localises to the cytoplasm. It catalyses the reaction aldehydo-D-ribose 5-phosphate + D-glyceraldehyde 3-phosphate + L-glutamine = pyridoxal 5'-phosphate + L-glutamate + phosphate + 3 H2O + H(+). The catalysed reaction is L-glutamine + H2O = L-glutamate + NH4(+). It functions in the pathway cofactor biosynthesis; pyridoxal 5'-phosphate biosynthesis. Its function is as follows. Catalyzes the hydrolysis of glutamine to glutamate and ammonia as part of the biosynthesis of pyridoxal 5'-phosphate. The resulting ammonia molecule is channeled to the active site of PDX1. Involved in the indirect resistance to singlet oxygen-generating photosensitizers. The protein is Probable pyridoxal 5'-phosphate synthase subunit PDX2 (PDX2) of Arabidopsis thaliana (Mouse-ear cress).